A 350-amino-acid polypeptide reads, in one-letter code: Histidinol-phosphate aminotransferase 1 (350 aa).

Lysine 210 is modified (N6-(pyridoxal phosphate)lysine).

Belongs to the class-II pyridoxal-phosphate-dependent aminotransferase family. Histidinol-phosphate aminotransferase subfamily. As to quaternary structure, homodimer. The cofactor is pyridoxal 5'-phosphate.

The catalysed reaction is L-histidinol phosphate + 2-oxoglutarate = 3-(imidazol-4-yl)-2-oxopropyl phosphate + L-glutamate. It participates in amino-acid biosynthesis; L-histidine biosynthesis; L-histidine from 5-phospho-alpha-D-ribose 1-diphosphate: step 7/9. This Pseudomonas fluorescens (strain Pf0-1) protein is Histidinol-phosphate aminotransferase 1.